We begin with the raw amino-acid sequence, 687 residues long: Phage-like element PBSX protein XkdV (687 aa).

This sequence to B.subtilis YqcC.

The polypeptide is Phage-like element PBSX protein XkdV (xkdV) (Bacillus subtilis (strain 168)).